Here is a 1114-residue protein sequence, read N- to C-terminus: Lysylphosphatidylglycerol biosynthesis bifunctional protein LysX (1114 aa).

Basic and acidic residues predominate over residues 1–11; sequence MSASTETHHAS. Residues 1-26 form a disordered region; the sequence is MSASTETHHASEAAVPTAPRPRPGLG. The tract at residues 1-618 is phosphatidylglycerol lysyltransferase; the sequence is MSASTETHHA…GLHSDGSAPG (618 aa). A run of 6 helical transmembrane segments spans residues 38 to 58, 77 to 97, 101 to 121, 126 to 146, 164 to 184, and 219 to 239; these read IAGL…ISPV, APDT…ALAS, IAWW…VIVS, NVNA…LIAA, GVLI…VELF, and FVNT…VITL. The tract at residues 619–1114 is lysine--tRNA ligase; that stretch reads EGLAPTATGP…LAFPLAKPRQ (496 aa). Residues 674–751 constitute a DNA-binding region (OB); that stretch reads VRIAGRLLRI…LSLLANEWRM (78 aa). Mg(2+)-binding residues include aspartate 1025 and glutamate 1032.

This sequence in the N-terminal section; belongs to the LPG synthetase family. The protein in the C-terminal section; belongs to the class-II aminoacyl-tRNA synthetase family. Mg(2+) serves as cofactor.

The protein localises to the cell membrane. The enzyme catalyses tRNA(Lys) + L-lysine + ATP = L-lysyl-tRNA(Lys) + AMP + diphosphate. It carries out the reaction L-lysyl-tRNA(Lys) + a 1,2-diacyl-sn-glycero-3-phospho-(1'-sn-glycerol) = a 1,2-diacyl-sn-glycero-3-phospho-1'-(3'-O-L-lysyl)-sn-glycerol + tRNA(Lys). Its function is as follows. Catalyzes the production of L-lysyl-tRNA(Lys)transfer and the transfer of a lysyl group from L-lysyl-tRNA(Lys) to membrane-bound phosphatidylglycerol (PG), which produces lysylphosphatidylglycerol (LPG), one of the components of the bacterial membrane with a positive net charge. LPG synthesis contributes to the resistance to cationic antimicrobial peptides (CAMPs) and likely protects M.tuberculosis against the CAMPs produced by competiting microorganisms (bacteriocins). In fact, the modification of anionic phosphatidylglycerol with positively charged L-lysine results in repulsion of the peptides. This is Lysylphosphatidylglycerol biosynthesis bifunctional protein LysX (lysX) from Rhodococcus jostii (strain RHA1).